The sequence spans 542 residues: Chitinase 1 (542 aa).

The GH18 domain occupies 68–506; the sequence is FNVLCYFTDW…NAAHEGLKRR (439 aa). Chitin is bound by residues 186–187 and 213–216; these read QE and GGWS. Glu-256 (proton donor) is an active-site residue. Chitin contacts are provided by residues Tyr-257, 323–326, and Trp-486; that span reads MTYD.

The protein belongs to the glycosyl hydrolase 18 family. Semipurified toxin complex consists of at least YenA1-YenA2-YenB-YenC1-YenC2-Chi1-Chi2. The Yen-TC:K9 subcomplex is about 26 nm tall and 22 nm in diameter with 5-fold symmetry and 5 copies of YenA1, YenA2, Chi1 and Chi2; the chitinase subunits may be solvent accessible on the exterior the complex. The Yen-TC:K9 subcomplex has no insecticidal activity. The native complex with additional YenB, YenC1 and YenC2 subunits is 16 nm taller and is insecticidal; the toxicity-conferring subunits are present at about 1 copy each.

Its subcellular location is the secreted. The catalysed reaction is Random endo-hydrolysis of N-acetyl-beta-D-glucosaminide (1-&gt;4)-beta-linkages in chitin and chitodextrins.. Its activity is regulated as follows. Toxin complex is secreted when grown at 25 degrees Celsius or less; at higher temperatures the proteins are present intracellularly but not secreted. In terms of biological role, part of an orally active toxin complex (TC) with strong insecticidal effects on larvae of the Coleoptera Costelytra zealandica, Acrossidius tasmania and Adoryphorus couloni and some Lepidoptera larvae. The TC has an endochitinase activity. This subunit might aid infection by degradation of the larval peritrophic membrane. In Yersinia entomophaga, this protein is Chitinase 1.